We begin with the raw amino-acid sequence, 293 residues long: AKT-interacting protein (293 aa).

Residues 1–11 (MNPFWSMSTSS) show a composition bias toward polar residues. The disordered stretch occupies residues 1-63 (MNPFWSMSTS…TSPAPAAQST (63 aa)). Positions 14–23 (KRSEGEEKTL) are enriched in basic and acidic residues. Residue Ser-30 is modified to Phosphoserine. A UBC core domain is found at 74 to 222 (YLEYSLLAEF…VVDSVQVCTA (149 aa)). Over residues 253–265 (MLTQKKKPEEQHN) the composition is skewed to basic and acidic residues. Positions 253–293 (MLTQKKKPEEQHNKSVHVAGLSWVKPGSVQPFSKEEKTVAT) are disordered.

The protein belongs to the ubiquitin-conjugating enzyme family. FTS subfamily. In terms of assembly, component of the FTS/Hook/FHIP complex (FHF complex), composed of AKTIP/FTS, FHIP1B, and one or more members of the Hook family of proteins HOOK1, HOOK2, and HOOK3. Interacts directly with HOOK1, HOOK2 and HOOK3. The FHF complex associates with the homotypic vesicular sorting complex (the HOPS complex). Also interacts with AKT1. May interact with FHIP1A.

The protein localises to the cytoplasm. Its subcellular location is the cell membrane. In terms of biological role, component of the FTS/Hook/FHIP complex (FHF complex). The FHF complex may function to promote vesicle trafficking and/or fusion via the homotypic vesicular protein sorting complex (the HOPS complex). Regulates apoptosis by enhancing phosphorylation and activation of AKT1. Increases release of TNFSF6 via the AKT1/GSK3B/NFATC1 signaling cascade. FHF complex promotes the distribution of AP-4 complex to the perinuclear area of the cell. This Pongo abelii (Sumatran orangutan) protein is AKT-interacting protein (AKTIP).